The chain runs to 129 residues: MRKIYATGKRKTAIAKVWLTPGKGGLSINEQSLNQWLGGHEAIKMKVMQPLLLTKQEQSVDIKAVVFGGGYSAQAEALRHGISKALNAYDIAFRAILKPKGLLTRDSRVVERKKYGKRKARRSPQFSKR.

The protein belongs to the universal ribosomal protein uS9 family.

This Helicobacter pylori (strain HPAG1) protein is Small ribosomal subunit protein uS9.